The following is a 37-amino-acid chain: Esculentin-2Rb (37 aa).

A disulfide bridge connects residues cysteine 31 and cysteine 37.

In terms of tissue distribution, expressed by the skin glands.

It is found in the secreted. Its function is as follows. Antimicrobial peptide. In Pelophylax ridibundus (Marsh frog), this protein is Esculentin-2Rb.